Reading from the N-terminus, the 303-residue chain is Mesenteric estrogen-dependent adipogenesis protein (303 aa).

It is found in the cytoplasm. Its function is as follows. Involved in processes that promote adipocyte differentiation, lipid accumulation, and glucose uptake in mature adipocytes. The protein is Mesenteric estrogen-dependent adipogenesis protein (MEDAG) of Bos taurus (Bovine).